Reading from the N-terminus, the 430-residue chain is L-cysteine:1D-myo-inositol 2-amino-2-deoxy-alpha-D-glucopyranoside ligase (430 aa).

Cys-48 is a binding site for Zn(2+). L-cysteinyl-5'-AMP-binding positions include 48-51 (CGIT), Thr-63, and 86-88 (NIT). The 'HIGH' region signature appears at 50 to 60 (ITPYDSTHLGH). Positions 192 to 197 (ERGGDP) match the 'ERGGDP' region motif. Residue Trp-232 coordinates L-cysteinyl-5'-AMP. Cys-236 is a Zn(2+) binding site. 254 to 256 (GSD) is a binding site for L-cysteinyl-5'-AMP. His-261 contacts Zn(2+). Residue Ile-288 participates in L-cysteinyl-5'-AMP binding. A 'KMSKS' region motif is present at residues 294-298 (KMSKS).

Belongs to the class-I aminoacyl-tRNA synthetase family. MshC subfamily. Monomer. Requires Zn(2+) as cofactor.

The catalysed reaction is 1D-myo-inositol 2-amino-2-deoxy-alpha-D-glucopyranoside + L-cysteine + ATP = 1D-myo-inositol 2-(L-cysteinylamino)-2-deoxy-alpha-D-glucopyranoside + AMP + diphosphate + H(+). In terms of biological role, catalyzes the ATP-dependent condensation of GlcN-Ins and L-cysteine to form L-Cys-GlcN-Ins. The chain is L-cysteine:1D-myo-inositol 2-amino-2-deoxy-alpha-D-glucopyranoside ligase (mshC) from Corynebacterium efficiens (strain DSM 44549 / YS-314 / AJ 12310 / JCM 11189 / NBRC 100395).